Reading from the N-terminus, the 1182-residue chain is Tyrosine-protein kinase ABL2 (1182 aa).

2 disordered regions span residues 1–47 and 60–80; these read MGQQ…TGFN and EDGF…HRPY. A lipid anchor (N-myristoyl glycine) is attached at Gly-2. Residues 2–106 form a CAP region; it reads GQQVGRVGEA…SKENLLGATE (105 aa). Over residues 20–30 the composition is skewed to low complexity; sequence RGIRGSSAARP. Phosphoserine is present on Ser-97. Residues 107 to 167 form the SH3 domain; the sequence is SDPNLFVALY…PSNYITPVNS (61 aa). Tyr-116, Tyr-161, Tyr-174, Tyr-185, Tyr-218, and Tyr-231 each carry phosphotyrosine. An SH2 domain is found at 173–263; it reads WYHGPVSRSA…GLVTTLHYPA (91 aa). Tyr-261 is modified (phosphotyrosine; by ABL1 and autocatalysis). At Tyr-272 the chain carries Phosphotyrosine; by autocatalysis. Ser-275 bears the Phosphoserine mark. The Protein kinase domain maps to 288-539; the sequence is ITMKHKLGGG…PSFAETHQAF (252 aa). ATP is bound at residue 294–302; it reads LGGGQYGEV. 2 positions are modified to phosphotyrosine: Tyr-299 and Tyr-303. ATP-binding positions include Lys-317 and 362–368; that span reads EYMPYGN. The active-site Proton acceptor is the Asp-409. The Kinase activation loop signature appears at 427 to 451; sequence DFGLSRLMTGDTYTAHAGAKFPIKW. Position 439 is a phosphotyrosine; by autocatalysis and SRC-type Tyr-kinases (Tyr-439). Phosphotyrosine is present on Tyr-459. Phosphotyrosine; by autocatalysis is present on Tyr-568. Residues 611–641 are disordered; the sequence is IRGAQASSGSPALPRKQRDKSPSSLLEDAKE. Phosphoserine is present on residues Ser-620, Ser-631, and Ser-633. Asp-647 carries the post-translational modification Phosphotyrosine. A disordered region spans residues 654-674; the sequence is SSFMKKRNAPTPPKRSSSFRE. Ser-655 carries the post-translational modification Phosphoserine. Residues 658–660 carry the Nuclear localization signal motif; sequence KKR. A phosphotyrosine mark is found at Ala-662 and Arg-668. 3 positions are modified to phosphoserine: Ser-669, Ser-670, and Ser-671. 2 positions are modified to phosphotyrosine: Tyr-683 and Tyr-718. A Phosphotyrosine; by autocatalysis modification is found at Tyr-683. The segment at 694-930 is F-actin-binding; that stretch reads SLQHADGFSF…PVLPTTHNHK (237 aa). Positions 763–794 are disordered; that stretch reads LRAGKPTASDDTSKPFPRSNSTSSMSSGLPEQ. At Lys-776 the chain carries N6-acetyllysine. Polar residues predominate over residues 780 to 791; the sequence is RSNSTSSMSSGL. Ser-783 bears the Phosphoserine mark. Thr-800 carries the phosphothreonine modification. Polar residues predominate over residues 807–823; that stretch reads RSKLQLERTVSTSSQPE. The disordered stretch occupies residues 807–851; that stretch reads RSKLQLERTVSTSSQPEENVDRANDMLPKKSEESAAPSRERPKAK. Ser-817 and Ser-820 each carry phosphoserine. Over residues 825–849 the composition is skewed to basic and acidic residues; that stretch reads NVDRANDMLPKKSEESAAPSRERPK. Phosphoserine is present on residues Ser-915 and Ser-936. Residues 964–1024 are disordered; it reads HQVTSSGDKD…TSETQEGGKK (61 aa). Over residues 1010–1019 the composition is skewed to polar residues; the sequence is TAGQSTSETQ. Residues 1020 to 1182 form an F-actin-binding region; sequence EGGKKAALGA…VQEISDVVQR (163 aa).

This sequence belongs to the protein kinase superfamily. Tyr protein kinase family. ABL subfamily. In terms of assembly, interacts with PSMA7. Interacts with CTTN. Found in a complex with ABL1, ABL2, CRK and UNC119; leading to the inhibition of CRK phosphorylation by ABL kinases. Mg(2+) is required as a cofactor. Mn(2+) serves as cofactor. In terms of processing, phosphorylated at Tyr-261 by ABL1 in response to oxidative stress. Phosphorylated by PDGFRB. Post-translationally, polyubiquitinated. Polyubiquitination of ABL2 leads to degradation. In terms of tissue distribution, widely expressed.

It is found in the cytoplasm. It localises to the cytoskeleton. The catalysed reaction is L-tyrosyl-[protein] + ATP = O-phospho-L-tyrosyl-[protein] + ADP + H(+). With respect to regulation, stabilized in the inactive form by an association between the SH3 domain and the SH2-TK linker region, interactions of the N-terminal cap, and contributions from an N-terminal myristoyl group and phospholipids. Activated by autophosphorylation as well as by SRC-family kinase-mediated phosphorylation. Activated by RIN1 binding to the SH2 and SH3 domains. Inhibited by imatinib mesylate (Gleevec) which is used for the treatment of chronic myeloid leukemia (CML). Phosphatidylinositol 4,5-bisphosphate (PIP2), a highly abundant phosphoinositide known to regulate cytoskeletal and membrane proteins, inhibits the tyrosine kinase activity. Functionally, non-receptor tyrosine-protein kinase that plays an ABL1-overlapping role in key processes linked to cell growth and survival such as cytoskeleton remodeling in response to extracellular stimuli, cell motility and adhesion and receptor endocytosis. Coordinates actin remodeling through tyrosine phosphorylation of proteins controlling cytoskeleton dynamics like MYH10 (involved in movement); CTTN (involved in signaling); or TUBA1 and TUBB (microtubule subunits). Binds directly F-actin and regulates actin cytoskeletal structure through its F-actin-bundling activity. Involved in the regulation of cell adhesion and motility through phosphorylation of key regulators of these processes such as CRK, CRKL, DOK1 or ARHGAP35. Adhesion-dependent phosphorylation of ARHGAP35 promotes its association with RASA1, resulting in recruitment of ARHGAP35 to the cell periphery where it inhibits RHO. Phosphorylates multiple receptor tyrosine kinases like PDGFRB and other substrates which are involved in endocytosis regulation such as RIN1. In brain, may regulate neurotransmission by phosphorylating proteins at the synapse. ABL2 also acts as a regulator of multiple pathological signaling cascades during infection. Pathogens can highjack ABL2 kinase signaling to reorganize the host actin cytoskeleton for multiple purposes, like facilitating intracellular movement and host cell exit. Finally, functions as its own regulator through autocatalytic activity as well as through phosphorylation of its inhibitor, ABI1. Positively regulates chemokine-mediated T-cell migration, polarization, and homing to lymph nodes and immune-challenged tissues, potentially via activation of NEDD9/HEF1 and RAP1. The protein is Tyrosine-protein kinase ABL2 (ABL2) of Homo sapiens (Human).